The chain runs to 309 residues: Ferrochelatase (309 aa).

His187 and Glu265 together coordinate Fe cation.

Belongs to the ferrochelatase family.

Its subcellular location is the cytoplasm. It carries out the reaction heme b + 2 H(+) = protoporphyrin IX + Fe(2+). The protein operates within porphyrin-containing compound metabolism; protoheme biosynthesis; protoheme from protoporphyrin-IX: step 1/1. Its function is as follows. Catalyzes the ferrous insertion into protoporphyrin IX. This is Ferrochelatase from Nitratiruptor sp. (strain SB155-2).